The chain runs to 70 residues: Large ribosomal subunit protein uL29 (70 aa).

The protein belongs to the universal ribosomal protein uL29 family.

This Prochlorococcus marinus (strain NATL1A) protein is Large ribosomal subunit protein uL29.